The sequence spans 712 residues: Polyribonucleotide nucleotidyltransferase (712 aa).

Mg(2+) is bound by residues D485 and D491. Residues 552 to 611 form the KH domain; it reads PRIHTMKIDPKKIKDVIGKGGAVIRSLTEETGTSIDIDDDGTVKIAATDNNAAKMVMSRI. Positions 621-689 constitute an S1 motif domain; that stretch reads NAIYTGKVSR…RQNRIRLTMK (69 aa).

The protein belongs to the polyribonucleotide nucleotidyltransferase family. In terms of assembly, component of the RNA degradosome, which is a multiprotein complex involved in RNA processing and mRNA degradation. The cofactor is Mg(2+).

Its subcellular location is the cytoplasm. It catalyses the reaction RNA(n+1) + phosphate = RNA(n) + a ribonucleoside 5'-diphosphate. In terms of biological role, involved in mRNA degradation. Catalyzes the phosphorolysis of single-stranded polyribonucleotides processively in the 3'- to 5'-direction. The polypeptide is Polyribonucleotide nucleotidyltransferase (Haemophilus ducreyi (strain 35000HP / ATCC 700724)).